The chain runs to 284 residues: Bifunctional protein FolD 1 (284 aa).

NADP(+) is bound by residues 166 to 168 (GAS) and I232.

Belongs to the tetrahydrofolate dehydrogenase/cyclohydrolase family. In terms of assembly, homodimer.

The enzyme catalyses (6R)-5,10-methylene-5,6,7,8-tetrahydrofolate + NADP(+) = (6R)-5,10-methenyltetrahydrofolate + NADPH. It carries out the reaction (6R)-5,10-methenyltetrahydrofolate + H2O = (6R)-10-formyltetrahydrofolate + H(+). Its pathway is one-carbon metabolism; tetrahydrofolate interconversion. Functionally, catalyzes the oxidation of 5,10-methylenetetrahydrofolate to 5,10-methenyltetrahydrofolate and then the hydrolysis of 5,10-methenyltetrahydrofolate to 10-formyltetrahydrofolate. In Ectopseudomonas mendocina (strain ymp) (Pseudomonas mendocina), this protein is Bifunctional protein FolD 1.